Consider the following 538-residue polypeptide: Nicotinate phosphoribosyltransferase (538 aa).

Residues tyrosine 21 and threonine 210 each contribute to the nicotinate site. Residue histidine 213 is modified to Phosphohistidine. Arginine 318 contacts nicotinate. Residue threonine 380 participates in 5-phospho-alpha-D-ribose 1-diphosphate binding.

This sequence belongs to the NAPRTase family. As to quaternary structure, homodimer. The cofactor is Mg(2+). Mn(2+) serves as cofactor. Transiently phosphorylated on a His residue during the reaction cycle. Phosphorylation strongly increases the affinity for substrates and increases the rate of nicotinate D-ribonucleotide production. Dephosphorylation regenerates the low-affinity form of the enzyme, leading to product release.

It is found in the cytoplasm. Its subcellular location is the cytosol. It catalyses the reaction nicotinate + 5-phospho-alpha-D-ribose 1-diphosphate + ATP + H2O = nicotinate beta-D-ribonucleotide + ADP + phosphate + diphosphate. It functions in the pathway cofactor biosynthesis; NAD(+) biosynthesis; nicotinate D-ribonucleotide from nicotinate: step 1/1. Its function is as follows. Catalyzes the first step in the biosynthesis of NAD from nicotinic acid, the ATP-dependent synthesis of beta-nicotinate D-ribonucleotide from nicotinate and 5-phospho-D-ribose 1-phosphate. Helps prevent cellular oxidative stress via its role in NAD biosynthesis. The chain is Nicotinate phosphoribosyltransferase (NAPRT) from Bos taurus (Bovine).